Consider the following 464-residue polypeptide: UDP-N-acetylmuramate--L-alanine ligase (464 aa).

117-123 is an ATP binding site; sequence GTHGKTT.

It belongs to the MurCDEF family.

It localises to the cytoplasm. It catalyses the reaction UDP-N-acetyl-alpha-D-muramate + L-alanine + ATP = UDP-N-acetyl-alpha-D-muramoyl-L-alanine + ADP + phosphate + H(+). The protein operates within cell wall biogenesis; peptidoglycan biosynthesis. Functionally, cell wall formation. This chain is UDP-N-acetylmuramate--L-alanine ligase, found in Streptomyces avermitilis (strain ATCC 31267 / DSM 46492 / JCM 5070 / NBRC 14893 / NCIMB 12804 / NRRL 8165 / MA-4680).